Consider the following 88-residue polypeptide: Small ribosomal subunit protein uS15 (88 aa).

This sequence belongs to the universal ribosomal protein uS15 family. In terms of assembly, part of the 30S ribosomal subunit. Forms a bridge to the 50S subunit in the 70S ribosome, contacting the 23S rRNA.

One of the primary rRNA binding proteins, it binds directly to 16S rRNA where it helps nucleate assembly of the platform of the 30S subunit by binding and bridging several RNA helices of the 16S rRNA. Its function is as follows. Forms an intersubunit bridge (bridge B4) with the 23S rRNA of the 50S subunit in the ribosome. In Methylacidiphilum infernorum (isolate V4) (Methylokorus infernorum (strain V4)), this protein is Small ribosomal subunit protein uS15.